The sequence spans 378 residues: Biotin synthase, mitochondrial (378 aa).

Residues 1-26 (MMLVRSVFRSQLRPSVSGGLQSASCY) constitute a mitochondrion transit peptide. The Radical SAM core domain occupies 79–308 (REVQQCTLLS…KAMVRLSAGR (230 aa)). [4Fe-4S] cluster contacts are provided by Cys94, Cys98, and Cys101. Cys138, Cys171, Cys231, and Arg303 together coordinate [2Fe-2S] cluster. The interval 357-378 (PPSFSEDDSESENCEKVASASH) is disordered.

Belongs to the radical SAM superfamily. Biotin synthase family. Requires [4Fe-4S] cluster as cofactor. [2Fe-2S] cluster serves as cofactor.

It localises to the mitochondrion. It carries out the reaction (4R,5S)-dethiobiotin + (sulfur carrier)-SH + 2 reduced [2Fe-2S]-[ferredoxin] + 2 S-adenosyl-L-methionine = (sulfur carrier)-H + biotin + 2 5'-deoxyadenosine + 2 L-methionine + 2 oxidized [2Fe-2S]-[ferredoxin]. It functions in the pathway cofactor biosynthesis; biotin biosynthesis; biotin from 7,8-diaminononanoate: step 2/2. This is Biotin synthase, mitochondrial (BIO2) from Arabidopsis thaliana (Mouse-ear cress).